The following is a 333-amino-acid chain: Electron transfer flavoprotein subunit alpha, mitochondrial (333 aa).

Residues 1–19 constitute a mitochondrion transit peptide; it reads MFRAAAPGQLRRAASLLRF. Residues 20–204 form a domain I region; the sequence is QSTLVIAEHA…GISEWLDQKL (185 aa). Lys-59 bears the N6-acetyllysine; alternate mark. Lys-59 is modified (N6-succinyllysine; alternate). Lys-62 is modified (N6-acetyllysine). Lys-69 carries the post-translational modification N6-acetyllysine; alternate. An N6-succinyllysine; alternate modification is found at Lys-69. Lys-75 is modified (N6-acetyllysine). The residue at position 85 (Lys-85) is an N6-acetyllysine; alternate. Lys-85 carries the post-translational modification N6-succinyllysine; alternate. Thr-93 carries the phosphothreonine modification. 2 positions are modified to N6-acetyllysine: Lys-101 and Lys-139. Ser-140 bears the Phosphoserine mark. N6-acetyllysine; alternate is present on Lys-158. Lys-158 carries the N6-succinyllysine; alternate modification. Lys-164 is modified (N6-acetyllysine). Residue Lys-187 is modified to N6-succinyllysine. Lys-203 bears the N6-acetyllysine; alternate mark. At Lys-203 the chain carries N6-succinyllysine; alternate. Positions 205–333 are domain II; sequence TKSDRPELTG…PEMTEILKKK (129 aa). An N6-succinyllysine modification is found at Lys-216. Arg-223 contacts FAD. Residues Lys-226 and Lys-232 each carry the N6-acetyllysine; alternate modification. 2 positions are modified to N6-succinyllysine; alternate: Lys-226 and Lys-232. FAD is bound by residues Ser-248, 263–266, 281–286, and Asn-300; these read VGQT and SGAIQH. An N6-succinyllysine modification is found at Lys-301. Residue 318-319 coordinates FAD; sequence DL.

It belongs to the ETF alpha-subunit/FixB family. Heterodimer composed of ETFA and ETFB. Identified in a complex that contains ETFA, ETFB and ETFRF1. Interaction with ETFRF1 promotes dissociation of the bound FAD and loss of electron transfer activity. Interacts with TASOR. It depends on FAD as a cofactor.

The protein resides in the mitochondrion matrix. Heterodimeric electron transfer flavoprotein that accepts electrons from several mitochondrial dehydrogenases, including acyl-CoA dehydrogenases, glutaryl-CoA and sarcosine dehydrogenase. It transfers the electrons to the main mitochondrial respiratory chain via ETF-ubiquinone oxidoreductase (ETF dehydrogenase). Required for normal mitochondrial fatty acid oxidation and normal amino acid metabolism. In Rattus norvegicus (Rat), this protein is Electron transfer flavoprotein subunit alpha, mitochondrial (Etfa).